The following is a 98-amino-acid chain: MPVVYVNIFLAFIVSLTGLLIYRSHLMSSLLCLEGMMLSLFVMLTVTVLNNHFTLANMAPIILLVFAACEAALGLSLLVMVSNTYGTDYVQNLNLLQC.

The next 3 membrane-spanning stretches (helical) occupy residues 1–21 (MPVVYVNIFLAFIVSLTGLLI), 29–49 (SLLCLEGMMLSLFVMLTVTVL), and 61–81 (IILLVFAACEAALGLSLLVMV).

It belongs to the complex I subunit 4L family. Core subunit of respiratory chain NADH dehydrogenase (Complex I) which is composed of 45 different subunits.

It localises to the mitochondrion inner membrane. It catalyses the reaction a ubiquinone + NADH + 5 H(+)(in) = a ubiquinol + NAD(+) + 4 H(+)(out). In terms of biological role, core subunit of the mitochondrial membrane respiratory chain NADH dehydrogenase (Complex I) which catalyzes electron transfer from NADH through the respiratory chain, using ubiquinone as an electron acceptor. Part of the enzyme membrane arm which is embedded in the lipid bilayer and involved in proton translocation. The protein is NADH-ubiquinone oxidoreductase chain 4L (MT-ND4L) of Helarctos malayanus (Malayan sun bear).